Reading from the N-terminus, the 104-residue chain is Conantokin-P (104 aa).

A signal peptide spans Met1–Ala26. Residues His27 to Arg80 constitute a propeptide that is removed on maturation. The segment at Gly29 to Lys87 is disordered. Residues Ser52 to Thr66 show a composition bias toward basic and acidic residues. Residues Glu83, Glu84, Glu90, Glu94, and Glu103 each carry the 4-carboxyglutamate modification. A divalent metal cation-binding residues include Glu90 and Glu94. Cys91 and Cys104 are disulfide-bonded.

Belongs to the conotoxin B superfamily. Expressed by the venom duct.

The protein localises to the secreted. Functionally, conantokins inhibit N-methyl-D-aspartate (NMDA) receptors. This toxin has the highest potency for the NR2B/GRIN2B subunit, followed by NR2A/GRIN2A, NR2C/GRIN2C, and NR2D/GRIN2D subunits. This Conus purpurascens (Purple cone) protein is Conantokin-P.